The following is a 486-amino-acid chain: Patatin-like phospholipase domain-containing protein 2 (486 aa).

Residues 1–8 (MFPRETKW) lie on the Cytoplasmic side of the membrane. A helical transmembrane segment spans residues 9–29 (NISFAGCGFLGVYHIGVASCL). Positions 10 to 179 (ISFAGCGFLG…SDNLPLYELK (170 aa)) constitute a PNPLA domain. The short motif at 14-19 (GCGFLG) is the GXGXXG element. Over 30-42 (REHAPFLVANATH) the chain is Extracellular. Asparagine 39 carries N-linked (GlcNAc...) asparagine glycosylation. A helical membrane pass occupies residues 43 to 63 (IYGASAGALTATALVTGACLG). The GXSXG signature appears at 45-49 (GASAG). Serine 47 functions as the Nucleophile in the catalytic mechanism. The Cytoplasmic segment spans residues 64 to 137 (EAGANIIEVS…IISHFSSKDE (74 aa)). Residue lysine 92 forms a Glycyl lysine isopeptide (Lys-Gly) (interchain with G-Cter in ubiquitin) linkage. Residues 138-158 (LIQANVCSTFIPVYCGLIPPT) traverse the membrane as a helical segment. Residues 159–331 (LQGVRYVDGG…TTLSNMLPVR (173 aa)) lie on the Extracellular side of the membrane. Catalysis depends on aspartate 166, which acts as the Proton acceptor. The short motif at 166-168 (DGG) is the DGA/G element. The chain crosses the membrane as a helical span at residues 332 to 352 (LATAMMVPYTLPLESAVSFTI). Residues 353 to 486 (RLLEWLPDVP…PQDPPGLPPC (134 aa)) lie on the Cytoplasmic side of the membrane. Serine 374 is modified (phosphoserine; in vitro). 2 positions are modified to phosphoserine; by PKA: serine 396 and serine 406. 2 positions are modified to phosphoserine; in vitro: serine 430 and serine 468. Residues 465 to 476 (APASPTAADPAT) are compositionally biased toward low complexity. The tract at residues 465 to 486 (APASPTAADPATPQDPPGLPPC) is disordered. Residues 477-486 (PQDPPGLPPC) are compositionally biased toward pro residues.

Interacts with ABHD5; this association stimulates PNPLA2 triglyceride hydrolase activity. Interacts with SERPINF1; this interaction stimulates the phospholipase A2 activity of PNPLA2. Despite a colocalization in lipid droplets, it probably does not interact with PLIN. Interacts with PLIN5; prevents interaction with ABHD5. Interacts with FAF2. Phosphorylation at Ser-406 by PKA is increased during fasting and moderate intensity exercise, and moderately increases lipolytic activity. Post-translationally, ubiquitinated by PEX2 in response to reactive oxygen species (ROS), leading to its degradation. Ubiquitination is stimulated by LDAH. In terms of tissue distribution, expressed at high levels in white and brown adipose tissue, and to a lesser degree in testis and cardiac muscle. Barely detected in liver, spleen, thymus, kidney, skeletal muscle, and brain. Among the white adipose depots, gonadal fat showed the highest level of expression compared with inguinal and renal white adipose tissues.

The protein resides in the lipid droplet. Its subcellular location is the cell membrane. It localises to the cytoplasm. The enzyme catalyses a triacylglycerol + H2O = a diacylglycerol + a fatty acid + H(+). It carries out the reaction a triacylglycerol + H2O = a 1,2-diacylglycerol + a fatty acid + H(+). The catalysed reaction is a triacylglycerol + H2O = a 1,3-diacylglycerol + a fatty acid + H(+). It catalyses the reaction a triacyl-sn-glycerol + H2O = a 2,3-diacyl-sn-glycerol + a fatty acid + H(+). The enzyme catalyses a triacyl-sn-glycerol + H2O = a 1,3-diacyl-sn-glycerol + a fatty acid + H(+). It carries out the reaction 1,2,3-tri-(9Z-octadecenoyl)-glycerol + H2O = 1,3-di-(9Z-octadecenoyl)-glycerol + (9Z)-octadecenoate + H(+). The catalysed reaction is 1,2,3-tri-(9Z)-hexadecenoylglycerol + H2O = 1,3-di-(9Z)-hexadecenoylglycerol + (9Z)-hexadecenoate + H(+). It catalyses the reaction 1,2,3-tri-(9Z,12Z)-octadecadienoylglycerol + H2O = 1,3-di-(9Z,12Z)-octadecadienoylglycerol + (9Z,12Z)-octadecadienoate + H(+). The enzyme catalyses 1,2,3-tri-(9Z,12Z,15Z)-octadecatrienoylglycerol + H2O = 1,3-di-(9Z,12Z,15Z)-octadecatrienoylglycerol + (9Z,12Z,15Z)-octadecatrienoate + H(+). It carries out the reaction 1,3-di-(9Z)-octadecenoyl-2-hexadecanoylglycerol + H2O = 1,3-di-(9Z-octadecenoyl)-glycerol + hexadecanoate + H(+). The catalysed reaction is 1,2-di-(9Z)-octadecenoyl-3-hexadecanoyl-sn-glycerol + H2O = 1-(9Z)-octadecenoyl-3-hexadecanoyl-sn-glycerol + (9Z)-octadecenoate + H(+). It catalyses the reaction 1-hexadecanoyl-2,3-di-(9Z)-octadecenoyl-sn-glycerol + H2O = 1-hexadecanoyl-3-(9Z)-octadecenoyl-sn-glycerol + (9Z)-octadecenoate + H(+). The enzyme catalyses 1,2,3-tri-(9Z-octadecenoyl)-glycerol + H2O = 2,3-di-(9Z)-octadecenoyl-sn-glycerol + (9Z)-octadecenoate + H(+). It carries out the reaction 1,2,3-tri-(9Z)-hexadecenoylglycerol + H2O = 2,3-di-(9Z)-hexadecenoyl-sn-glycerol + (9Z)-hexadecenoate + H(+). The catalysed reaction is 1,2,3-tri-(9Z,12Z)-octadecadienoylglycerol + H2O = 2,3-di-(9Z,12Z)-octadecadienoyl-sn-glycerol + (9Z,12Z)-octadecadienoate + H(+). It catalyses the reaction 1,2,3-tri-(9Z,12Z,15Z)-octadecatrienoylglycerol + H2O = 2,3-di-(9Z,12Z,15Z)-octadecatrienoyl-sn-glycerol + (9Z,12Z,15Z)-octadecatrienoate + H(+). The enzyme catalyses 1,3-di-(9Z)-octadecenoyl-2-hexadecanoylglycerol + H2O = 2-hexadecanoyl-3-(9Z)-octadecenoyl-sn-glycerol + (9Z)-octadecenoate + H(+). It carries out the reaction 1-hexadecanoyl-2,3-di-(9Z)-octadecenoyl-sn-glycerol + H2O = 2,3-di-(9Z)-octadecenoyl-sn-glycerol + hexadecanoate + H(+). The catalysed reaction is 1,2-di-(9Z)-octadecenoyl-3-hexadecanoyl-sn-glycerol + H2O = 2-(9Z-octadecenoyl)-3-hexadecanoyl-sn-glycerol + (9Z)-octadecenoate + H(+). It catalyses the reaction 1,2-di-(9Z-octadecenoyl)-glycerol + (9Z)-octadecenoate + H(+) = 1,2,3-tri-(9Z-octadecenoyl)-glycerol + H2O. The enzyme catalyses a 1-acylglycerol + a 1,3-diacylglycerol = a triacylglycerol + glycerol. It carries out the reaction a 1-acylglycerol + a 1,2-diacylglycerol = a triacylglycerol + glycerol. The catalysed reaction is 2 a 1-acylglycerol = a 1,2-diacylglycerol + glycerol. It catalyses the reaction a triacylglycerol + all-trans-retinol = an all-trans-retinyl ester + a diacylglycerol. The enzyme catalyses 1-(9Z-octadecenoyl)-glycerol + 1,3-di-(9Z-octadecenoyl)-glycerol = 1,2,3-tri-(9Z-octadecenoyl)-glycerol + glycerol. It carries out the reaction 1-(9Z-octadecenoyl)-glycerol + 1,2-di-(9Z-octadecenoyl)-glycerol = 1,2,3-tri-(9Z-octadecenoyl)-glycerol + glycerol. The catalysed reaction is 2 1-(9Z-octadecenoyl)-glycerol = 1,2-di-(9Z-octadecenoyl)-glycerol + glycerol. It catalyses the reaction 1,2,3-tri-(9Z-octadecenoyl)-glycerol + all-trans-retinol = all-trans-retinyl 9Z-octadecenoate + di-(9Z)-octadecenoylglycerol. The enzyme catalyses a 1,2-diacyl-sn-glycero-3-phosphocholine + H2O = a 1-acyl-sn-glycero-3-phosphocholine + a fatty acid + H(+). It carries out the reaction 1,2,3-tri-(9Z-octadecenoyl)-glycerol + 9-hydroxy-octadecanoate = 9-(9Z-octadecenoyloxy)-octadecanoate + 2,3-di-(9Z)-octadecenoyl-sn-glycerol. The catalysed reaction is 1-hexadecanoyl-2,3-di-(9Z)-octadecenoyl-sn-glycerol + 9-hydroxy-octadecanoate = 9-hexadecanoyloxy-octadecanoate + 2,3-di-(9Z)-octadecenoyl-sn-glycerol. It catalyses the reaction 1,2,3-tri-(10Z)-heptadecenoylglycerol + 9-hydroxy-octadecanoate = 2,3-di-(10Z-heptadecenoyl)-sn-glycerol + 9-(10Z-heptadecenoyloxy)-octadecanoate. The enzyme catalyses 1,2,3-tri-(9Z,12Z)-octadecadienoylglycerol + 9-hydroxy-octadecanoate = 2,3-di-(9Z,12Z)-octadecadienoyl-sn-glycerol + 9-(9Z,12Z-octadecadienoyloxy)-octadecanoate. It carries out the reaction 1,2,3-tri-(9Z)-hexadecenoylglycerol + 9-hydroxy-octadecanoate = 2,3-di-(9Z)-hexadecenoyl-sn-glycerol + 9-(9Z-hexadecenoyloxy)-octadecanoate. The catalysed reaction is 9-hydroxy-octadecanoate + 1,2-di-(9Z-octadecenoyl)-sn-glycerol = 9-(9Z-octadecenoyloxy)-octadecanoate + 2-(9Z-octadecenoyl)-glycerol. It catalyses the reaction 1-hexadecanoyl-2,3-di-(9Z)-octadecenoyl-sn-glycerol + 9-hydroxy-octadecanoate = 1-hexadecanoyl-3-(9Z)-octadecenoyl-sn-glycerol + 9-(9Z-octadecenoyloxy)-octadecanoate. The protein operates within glycerolipid metabolism; triacylglycerol degradation. Stimulated by PKA-dependent PLIN phosphorylation. In terms of biological role, catalyzes the initial step in triglyceride hydrolysis in adipocyte and non-adipocyte lipid droplets. Exhibits a strong preference for the hydrolysis of long-chain fatty acid esters at the sn-2 position of the glycerol backbone and acts coordinately with LIPE/HLS and DGAT2 within the lipolytic cascade. Also possesses acylglycerol transacylase and phospholipase A2 activities. Transfers fatty acid from triglyceride to retinol, hydrolyzes retinylesters, and generates 1,3-diacylglycerol from triglycerides. Regulates adiposome size and may be involved in the degradation of adiposomes. Catalyzes the formation of an ester bond between hydroxy fatty acids and fatty acids derived from triglycerides or diglycerides to generate fatty acid esters of hydroxy fatty acids (FAHFAs) in adipocytes. Acts antagonistically with LDAH in regulation of cellular lipid stores. Inhibits LDAH-stimulated lipid droplet fusion. May play an important role in energy homeostasis. May play a role in the response of the organism to starvation, enhancing hydrolysis of triglycerides and providing free fatty acids to other tissues to be oxidized in situations of energy depletion. The polypeptide is Patatin-like phospholipase domain-containing protein 2 (Mus musculus (Mouse)).